The following is a 166-amino-acid chain: Cyanate hydratase (166 aa).

Active-site residues include Arg-106, Glu-109, and Ser-132.

It belongs to the cyanase family.

The catalysed reaction is cyanate + hydrogencarbonate + 3 H(+) = NH4(+) + 2 CO2. Functionally, catalyzes the reaction of cyanate with bicarbonate to produce ammonia and carbon dioxide. This Verticillium alfalfae (strain VaMs.102 / ATCC MYA-4576 / FGSC 10136) (Verticillium wilt of alfalfa) protein is Cyanate hydratase.